The following is a 237-amino-acid chain: Pyridoxine 5'-phosphate synthase (237 aa).

Residues Asn-7 and Arg-18 each contribute to the 3-amino-2-oxopropyl phosphate site. His-43 functions as the Proton acceptor in the catalytic mechanism. The 1-deoxy-D-xylulose 5-phosphate site is built by Arg-45 and His-50. Glu-70 acts as the Proton acceptor in catalysis. Thr-100 is a 1-deoxy-D-xylulose 5-phosphate binding site. The active-site Proton donor is His-190. Residues Asp-191 and 213 to 214 (GH) each bind 3-amino-2-oxopropyl phosphate.

It belongs to the PNP synthase family. In terms of assembly, homooctamer; tetramer of dimers.

Its subcellular location is the cytoplasm. It carries out the reaction 3-amino-2-oxopropyl phosphate + 1-deoxy-D-xylulose 5-phosphate = pyridoxine 5'-phosphate + phosphate + 2 H2O + H(+). The protein operates within cofactor biosynthesis; pyridoxine 5'-phosphate biosynthesis; pyridoxine 5'-phosphate from D-erythrose 4-phosphate: step 5/5. In terms of biological role, catalyzes the complicated ring closure reaction between the two acyclic compounds 1-deoxy-D-xylulose-5-phosphate (DXP) and 3-amino-2-oxopropyl phosphate (1-amino-acetone-3-phosphate or AAP) to form pyridoxine 5'-phosphate (PNP) and inorganic phosphate. This chain is Pyridoxine 5'-phosphate synthase, found in Bacteroides thetaiotaomicron (strain ATCC 29148 / DSM 2079 / JCM 5827 / CCUG 10774 / NCTC 10582 / VPI-5482 / E50).